A 942-amino-acid chain; its full sequence is DDB1- and CUL4-associated factor 5 (942 aa).

WD repeat units follow at residues 51–91 (GHFG…HSRV), 99–139 (EHHS…LDVF), 140–180 (AHED…HGEP), 185–225 (NYPS…SSLL), 277–317 (FNSC…EAGG), and 331–370 (GHRS…GCTG). Disordered regions lie at residues 449–478 (GVSE…ESAD) and 490–509 (TTNT…AASR). Polar residues predominate over residues 454–465 (SGYTDSESSASL). Thr-500 carries the phosphothreonine modification. Ser-531, Ser-533, Ser-626, Ser-628, Ser-645, Ser-648, and Ser-651 each carry phosphoserine. Disordered stretches follow at residues 544 to 655 (TDLF…DIES), 676 to 824 (NNKD…EERS), and 889 to 942 (ACET…KLKT). Residues 625–641 (LSSSPTSSPERSTSTLE) are compositionally biased toward low complexity. Composition is skewed to basic and acidic residues over residues 690 to 701 (DEGRAGTSHKDN) and 728 to 738 (CSKDTFKEETP). Polar residues predominate over residues 760–770 (GTSQDTGNSGS). Ser-794 carries the phosphoserine modification. A compositionally biased stretch (polar residues) spans 801-815 (SGSTLNSGSGNCPRT).

In terms of assembly, interacts with DDB1, CUL4A or CUL4B. Interacts with L3MBTL3. Interacts with DNMT1. Interacts with E2F1. Interacts with SOX2. In terms of tissue distribution, ubiquitous.

The protein operates within protein modification; protein ubiquitination. In terms of biological role, is a substrate receptor for the CUL4-DDB1 E3 ubiquitin-protein ligase complex (CRL4). The complex CRL4-DCAF5 is involved in the ubiquitination of a set of methylated non-histone proteins, including SOX2, DNMT1 and E2F1. In Homo sapiens (Human), this protein is DDB1- and CUL4-associated factor 5 (DCAF5).